A 385-amino-acid chain; its full sequence is ATP phosphoribosyltransferase regulatory subunit (385 aa).

Belongs to the class-II aminoacyl-tRNA synthetase family. HisZ subfamily. As to quaternary structure, heteromultimer composed of HisG and HisZ subunits.

The protein localises to the cytoplasm. The protein operates within amino-acid biosynthesis; L-histidine biosynthesis; L-histidine from 5-phospho-alpha-D-ribose 1-diphosphate: step 1/9. In terms of biological role, required for the first step of histidine biosynthesis. May allow the feedback regulation of ATP phosphoribosyltransferase activity by histidine. This Lysinibacillus sphaericus (strain C3-41) protein is ATP phosphoribosyltransferase regulatory subunit.